The sequence spans 352 residues: Neutral protease 2 (352 aa).

The N-terminal stretch at 1-19 (MRVTTLSTALFALASTAVS) is a signal peptide. The propeptide occupies 20–175 (APTAGSSSPG…TKALSQLTRR (156 aa)). 3 disulfides stabilise this stretch: Cys-181–Cys-253, Cys-260–Cys-278, and Cys-292–Cys-352. His-303 contributes to the Zn(2+) binding site. Glu-304 is an active-site residue. Residues His-307 and Asp-318 each coordinate Zn(2+).

This sequence belongs to the peptidase M35 family. Requires Zn(2+) as cofactor.

It carries out the reaction Preferential cleavage of bonds with hydrophobic residues in P1'. Also 3-Asn-|-Gln-4 and 8-Gly-|-Ser-9 bonds in insulin B chain.. In terms of biological role, metalloprotease that shows high activities on basic nuclear substrates such as histone and protamine. The protein is Neutral protease 2 of Aspergillus oryzae (strain ATCC 42149 / RIB 40) (Yellow koji mold).